We begin with the raw amino-acid sequence, 85 residues long: Large ribosomal subunit protein bL27 (85 aa).

Residues 1–25 form a disordered region; it reads MAHKKAGSSSKNGRDSNPQYLGVKR. Positions 7-19 are enriched in polar residues; it reads GSSSKNGRDSNPQ.

This sequence belongs to the bacterial ribosomal protein bL27 family.

In Micrococcus luteus (strain ATCC 4698 / DSM 20030 / JCM 1464 / CCM 169 / CCUG 5858 / IAM 1056 / NBRC 3333 / NCIMB 9278 / NCTC 2665 / VKM Ac-2230) (Micrococcus lysodeikticus), this protein is Large ribosomal subunit protein bL27.